The chain runs to 204 residues: Terpene cyclase ausL (204 aa).

5 helical membrane-spanning segments follow: residues 19–39 (LSEM…LAMV), 49–69 (AIAV…AWIY), 75–95 (HWQG…AATL), 114–134 (LVLL…CLAL), and 138–158 (GALG…SAAV).

It belongs to the paxB family.

It is found in the membrane. Its pathway is secondary metabolite biosynthesis; terpenoid biosynthesis. Functionally, terpene cyclase; part of the gene cluster B that mediates the biosynthesis of austinol and dehydroaustinol, two fungal meroterpenoids. The first step of the pathway is the synthesis of 3,5-dimethylorsellinic acid by the polyketide synthase ausA. 3,5-dimethylorsellinic acid is then prenylated by the polyprenyl transferase ausN. Further epoxidation by the FAD-dependent monooxygenase ausM and cyclization by the probable terpene cyclase ausL lead to the formation of protoaustinoid A. Protoaustinoid A is then oxidized to spiro-lactone preaustinoid A3 by the combined action of the FAD-binding monooxygenases ausB and ausC, and the dioxygenase ausE. Acid-catalyzed keto-rearrangement and ring contraction of the tetraketide portion of preaustinoid A3 by ausJ lead to the formation of preaustinoid A4. The aldo-keto reductase ausK, with the help of ausH, is involved in the next step by transforming preaustinoid A4 into isoaustinone which is in turn hydroxylated by the P450 monooxygenase ausI to form austinolide. Finally, the cytochrome P450 monooxygenase ausG modifies austinolide to austinol. Austinol can be further modified to dehydroaustinol which forms a diffusible complex with diorcinol that initiates conidiation. Due to genetic rearrangements of the clusters and the subsequent loss of some enzymes, the end products of the Emericella nidulans austinoid biosynthesis clusters are austinol and dehydroaustinol, even if additional enzymes, such as the O-acetyltransferase ausQ and the cytochrome P450 monooxygenase ausR are still functional. This Emericella nidulans (strain FGSC A4 / ATCC 38163 / CBS 112.46 / NRRL 194 / M139) (Aspergillus nidulans) protein is Terpene cyclase ausL.